Here is a 1248-residue protein sequence, read N- to C-terminus: Structural polyprotein (1248 aa).

The span at 1–10 (MEFIPTQTFY) shows a compositional bias: polar residues. A disordered region spans residues 1 to 104 (MEFIPTQTFY…KKKKPGRRER (104 aa)). A host transcription inhibition region spans residues 36–68 (RKAGQLAQLISAVNKLTMRAVPQQKPRKNRKNK). Over residues 60 to 72 (KPRKNRKNKKQKQ) the composition is skewed to basic residues. The Nuclear localization signal signature appears at 61–99 (PRKNRKNKKQKQKQQAPRNNMNQKKQPPKKKPAQKKKKP). Positions 73–85 (KQQAPRNNMNQKK) are enriched in low complexity. Residues 84 to 114 (KKQPPKKKPAQKKKKPGRRERMCMKIENDCI) are binding to the viral RNA. Positions 86-101 (QPPKKKPAQKKKKPGR) are enriched in basic residues. A ribosome-binding region spans residues 99–113 (PGRRERMCMKIENDC). Cysteine 113 and cysteine 128 form a disulfide bridge. Positions 113 to 261 (CIFEVKHEGK…KITPEGAEEW (149 aa)) constitute a Peptidase S3 domain. Residue histidine 139 is the Charge relay system of the active site. The Nuclear export signal motif lies at 144-154 (IDNADLAKLAF). Residues 155 to 160 (KRSSKY) form an interaction with spike glycoprotein E2 region. Residue aspartate 161 is the Charge relay system of the active site. The tract at residues 183 to 193 (PEGYYNWHHGA) is dimerization of the capsid protein. The active-site Charge relay system is the serine 213. Residues 219–223 (DNKGR) are dimerization of the capsid protein. The functions as an uncleaved signal peptide for the precursor of protein E3/E2 stretch occupies residues 262–274 (SLAIPVMCLLANT). Over 262–692 (SLAIPVMCLL…YYYELYPTMT (431 aa)) the chain is Extracellular. Intrachain disulfides connect cysteine 269/cysteine 278, cysteine 283/cysteine 287, cysteine 286/cysteine 318, cysteine 344/cysteine 450, cysteine 347/cysteine 353, cysteine 416/cysteine 430, cysteine 478/cysteine 591, cysteine 526/cysteine 550, and cysteine 528/cysteine 545. The N-linked (GlcNAc...) asparagine; by host glycan is linked to asparagine 273. 2 interaction with host Mxra8 receptor regions span residues 351 to 354 (HSCH) and 387 to 389 (HDW). Interaction with host Mxra8 receptor stretches follow at residues 509-512 (QSGN) and 541-547 (VINNCKV). Asparagine 588 and asparagine 670 each carry an N-linked (GlcNAc...) asparagine; by host glycan. A helical membrane pass occupies residues 693 to 713 (VVVVSVASFVLLSMVGVAVGM). Residues 714–748 (CMCARRRCITPYELTPGATVPFLLSLICCIRTAKA) lie on the Cytoplasmic side of the membrane. An interaction with the capsid protein region spans residues 716-720 (CARRR). 3 S-palmitoyl cysteine; by host lipidation sites follow: cysteine 721, cysteine 741, and cysteine 742. Residues 721–741 (CITPYELTPGATVPFLLSLIC) form a transient transmembrane before p62-6K protein processing region. A disulfide bridge links cysteine 721 with cysteine 742. Residues 749 to 763 (ATYQEAAVYLWNEQQ) are Extracellular-facing. A helical membrane pass occupies residues 764–784 (PLFWLQAIIPLAALIVLCNCL). Over 785 to 795 (RLLPCCCKTLT) the chain is Cytoplasmic. A helical transmembrane segment spans residues 796-816 (FLAVMSVGAHTVSAYEHVTVI). Residues 817 to 1224 (PNTVGVPYKT…AMSWVQKITG (408 aa)) are Extracellular-facing. Cystine bridges form between cysteine 858–cysteine 923, cysteine 871–cysteine 903, and cysteine 877–cysteine 887. Residues 893 to 910 (VYPFMWGGAYCFCDTENT) are E1 fusion peptide loop. Residues asparagine 950 and asparagine 1079 are each glycosylated (N-linked (GlcNAc...) asparagine; by host). 4 disulfide bridges follow: cysteine 1068–cysteine 1080, cysteine 1110–cysteine 1185, cysteine 1115–cysteine 1189, and cysteine 1137–cysteine 1179. Residues 1225–1245 (GVGLVVAVAALILIVVLCVSF) traverse the membrane as a helical segment. A lipid anchor (S-palmitoyl cysteine; by host) is attached at cysteine 1242. At 1246 to 1248 (SRH) the chain is on the cytoplasmic side.

Homodimer. Homomultimer. Interacts with host karyopherin KPNA4; this interaction allows the nuclear import of the viral capsid protein. Interacts with spike glycoprotein E2. Interacts with host IRAK1; the interaction leads to inhibition of IRAK1-dependent signaling. In terms of assembly, the precursor of protein E3/E2 and E1 form a heterodimer shortly after synthesis. As to quaternary structure, interacts with spike glycoprotein E2. The precursor of protein E3/E2 and E1 form a heterodimer shortly after synthesis. Processing of the precursor of protein E3/E2 into E2 and E3 results in a heterodimer of the spike glycoproteins E2 and E1. Spike at virion surface are constituted of three E2-E1 heterodimers. After target cell attachment and endocytosis, E1 change conformation to form homotrimers. Interacts with 6K protein. Interacts with host MXRA8; this interaction mediates virus entry. The interaction involves 2 adjacent E2-E1 heterodimers. Interacts with spike glycoprotein E1. Processing of the precursor of protein E3/E2 into E2 and E3 results in a heterodimer of the spike glycoproteins E2 and E1. Spike at virion surface are constituted of a trimer of E2-E1 heterodimers. Interacts with 6K protein. Interacts with host MXRA8; this interaction mediates virus entry. The interaction involves 2 adjacent E2-E1 heterodimers. In terms of assembly, oligomer. Interacts with spike glycoprotein E1. Interacts with spike glycoprotein E2. Post-translationally, structural polyprotein: Specific enzymatic cleavages in vivo yield mature proteins. Capsid protein is auto-cleaved during polyprotein translation, unmasking a signal peptide at the N-terminus of the precursor of E3/E2. The remaining polyprotein is then targeted to the host endoplasmic reticulum, where host signal peptidase cleaves it into pE2, 6K and E1 proteins. pE2 is further processed to mature E3 and E2 by host furin in trans-Golgi vesicle. In terms of processing, palmitoylated via thioester bonds. These palmitoylations may induce disruption of the C-terminus transmembrane. This would result in the reorientation of E2 C-terminus from lumenal to cytoplasmic side. N-glycosylated. Post-translationally, palmitoylated via thioester bonds.

The protein localises to the virion. Its subcellular location is the host cytoplasm. The protein resides in the host cell membrane. It localises to the host nucleus. It is found in the virion membrane. The protein localises to the host Golgi apparatus. Its subcellular location is the host trans-Golgi network. The protein resides in the host endoplasmic reticulum. The enzyme catalyses Autocatalytic release of the core protein from the N-terminus of the togavirus structural polyprotein by hydrolysis of a -Trp-|-Ser- bond.. In terms of biological role, forms an icosahedral capsid with a T=4 symmetry composed of 240 copies of the capsid protein surrounded by a lipid membrane through which penetrate 80 spikes composed of trimers of E1-E2 heterodimers. The capsid protein binds to the viral RNA genome at a site adjacent to a ribosome binding site for viral genome translation following genome release. Possesses a protease activity that results in its autocatalytic cleavage from the nascent structural protein. Following its self-cleavage, the capsid protein transiently associates with ribosomes, and within several minutes the protein binds to viral RNA and rapidly assembles into icosahedric core particles. The resulting nucleocapsid eventually associates with the cytoplasmic domain of the spike glycoprotein E2 at the cell membrane, leading to budding and formation of mature virions. In case of infection, new virions attach to target cells and after clathrin-mediated endocytosis their membrane fuses with the host endosomal membrane. This leads to the release of the nucleocapsid into the cytoplasm, followed by an uncoating event necessary for the genomic RNA to become accessible. The uncoating might be triggered by the interaction of capsid proteins with ribosomes. Binding of ribosomes would release the genomic RNA since the same region is genomic RNA-binding and ribosome-binding. Specifically inhibits interleukin-1 receptor-associated kinase 1/IRAK1-dependent signaling during viral entry, representing a means by which the alphaviruses may evade innate immune detection and activation prior to viral gene expression. Degrades host cyclic GMP-AMP synthase (CGAS) thereby inhibiting the cGAS-STING pathway. Functionally, provides the signal sequence for the translocation of the precursor of protein E3/E2 to the host endoplasmic reticulum. Furin-cleaved E3 remains associated with spike glycoprotein E1 and mediates pH protection of the latter during the transport via the secretory pathway. After virion release from the host cell, the assembly protein E3 is gradually released in the extracellular space. Its function is as follows. Plays a role in viral attachment to target host cell, by binding to the cell receptor MXRA8. Synthesized as a p62 precursor which is processed by furin at the cell membrane just before virion budding, giving rise to E2-E1 heterodimer. The p62-E1 heterodimer is stable, whereas E2-E1 is unstable and dissociate at low pH. p62 is processed at the last step, presumably to avoid E1 fusion activation before its final export to cell surface. E2 C-terminus contains a transitory transmembrane that would be disrupted by palmitoylation, resulting in reorientation of the C-terminal tail from lumenal to cytoplasmic side. This step is critical since E2 C-terminus is involved in budding by interacting with capsid proteins. This release of E2 C-terminus in cytoplasm occurs lately in protein export, and precludes premature assembly of particles at the endoplasmic reticulum membrane. Acts as a viroporin that participates in virus glycoprotein processing and transport to the plasma membrane, cell permeabilization and budding of viral particles. Disrupts the calcium homeostasis of the cell, probably at the endoplasmic reticulum level. This leads to cytoplasmic calcium elevation. Because of its lipophilic properties, the 6K protein is postulated to influence the selection of lipids that interact with the transmembrane domains of the glycoproteins, which, in turn, affects the deformability of the bilayer required for the extreme curvature that occurs as budding proceeds. Present in low amount in virions, about 3% compared to viral glycoproteins. In terms of biological role, class II viral fusion protein. Fusion activity is inactive as long as E1 is bound to E2 in mature virion. After virus attachment to target cell via host MXRA8 and endocytosis, acidification of the endosome induce dissociation of E1/E2 heterodimer and concomitant trimerization of the E1 subunits. This E1 trimer is fusion active, and promotes release of viral nucleocapsid in cytoplasm after endosome and viral membrane fusion. Efficient fusion requires the presence of cholesterol and sphingolipid in the target membrane. The polypeptide is Structural polyprotein (Chikungunya virus (strain Nagpur) (CHIKV)).